The following is a 78-amino-acid chain: Serine--glyoxylate aminotransferase (78 aa).

It belongs to the class-V pyridoxal-phosphate-dependent aminotransferase family. As to quaternary structure, homodimer. Pyridoxal 5'-phosphate serves as cofactor. Expressed in leaves but not in root tissue or seedlings.

It localises to the peroxisome. The enzyme catalyses glyoxylate + L-serine = 3-hydroxypyruvate + glycine. It catalyses the reaction glyoxylate + L-alanine = glycine + pyruvate. Its activity is regulated as follows. Inhibited by aminooxyacetate. The sequence is that of Serine--glyoxylate aminotransferase from Triticum aestivum (Wheat).